The chain runs to 274 residues: Thymidylate synthase (274 aa).

Position 21 (Arg21) interacts with dUMP. (6R)-5,10-methylene-5,6,7,8-tetrahydrofolate is bound at residue His51. Residue 123-124 (RR) coordinates dUMP. The active-site Nucleophile is Cys156. DUMP-binding positions include 176–179 (RSAD), Asn187, and 217–219 (HIY). Asp179 contacts (6R)-5,10-methylene-5,6,7,8-tetrahydrofolate. Ser273 contacts (6R)-5,10-methylene-5,6,7,8-tetrahydrofolate.

Belongs to the thymidylate synthase family. Bacterial-type ThyA subfamily. Homodimer.

The protein localises to the cytoplasm. The enzyme catalyses dUMP + (6R)-5,10-methylene-5,6,7,8-tetrahydrofolate = 7,8-dihydrofolate + dTMP. It participates in pyrimidine metabolism; dTTP biosynthesis. Its function is as follows. Catalyzes the reductive methylation of 2'-deoxyuridine-5'-monophosphate (dUMP) to 2'-deoxythymidine-5'-monophosphate (dTMP) while utilizing 5,10-methylenetetrahydrofolate (mTHF) as the methyl donor and reductant in the reaction, yielding dihydrofolate (DHF) as a by-product. This enzymatic reaction provides an intracellular de novo source of dTMP, an essential precursor for DNA biosynthesis. This is Thymidylate synthase from Francisella philomiragia subsp. philomiragia (strain ATCC 25017 / CCUG 19701 / FSC 153 / O#319-036).